Reading from the N-terminus, the 508-residue chain is Cell division protein FtsZ (508 aa).

Residues 24 to 28 (GAGGN), 111 to 113 (GTG), Glu142, Arg146, and Asp190 contribute to the GTP site. Disordered stretches follow at residues 342–389 (IAET…SAPQ) and 428–508 (VAEE…RLAN). The segment covering 464–482 (QQASAPQAQARSAQSARPQ) has biased composition (low complexity).

Belongs to the FtsZ family. In terms of assembly, homodimer. Polymerizes to form a dynamic ring structure in a strictly GTP-dependent manner. Interacts directly with several other division proteins.

It localises to the cytoplasm. Its function is as follows. Essential cell division protein that forms a contractile ring structure (Z ring) at the future cell division site. The regulation of the ring assembly controls the timing and the location of cell division. One of the functions of the FtsZ ring is to recruit other cell division proteins to the septum to produce a new cell wall between the dividing cells. Binds GTP and shows GTPase activity. This Caulobacter vibrioides (strain ATCC 19089 / CIP 103742 / CB 15) (Caulobacter crescentus) protein is Cell division protein FtsZ.